The primary structure comprises 275 residues: Voltage-dependent calcium channel gamma-5 subunit (275 aa).

4 helical membrane-spanning segments follow: residues 8-28, 103-123, 129-149, and 181-201; these read ALTLLSSVFAVCGLGLLGIAV, FPLVSLFFMFIGFILSNIGHI, ILAFVSGIFFILSGLSLVVGL, and FAAISFLLTESAGVMSVYLFM.

This sequence belongs to the PMP-22/EMP/MP20 family. CACNG subfamily. The L-type calcium channel is composed of five subunits: alpha-1, alpha-2/delta, beta and gamma. Acts as an auxiliary subunit for AMPA-selective glutamate receptors (AMPARs). Found in a complex with GRIA1, GRIA2, GRIA3, GRIA4, CNIH2, CNIH3, CACNG2, CACNG3, CACNG4, CACNG7 and CACNG8. Interacts with GRIA1, GRIA2, GRIA3 and GRIA4. Brain. Enriched in Bergman glia, as well as a variety of neuronal populations including locus coeruleus, olfactory bulb, lateral septal nucleus, interpeduncular nucleus, and the CA2 and rostral/medial CA1 regions of hippocampus.

It is found in the membrane. The protein resides in the postsynaptic density membrane. Regulates the gating properties of AMPA-selective glutamate receptors (AMPARs). Modulates their gating properties by accelerating their rates of activation, deactivation and desensitization. Displays subunit-specific AMPA receptor regulation. Shows specificity for GRIA1, GRIA4 and the long isoform of GRIA2. Thought to stabilize the calcium channel in an inactivated (closed) state. This Mus musculus (Mouse) protein is Voltage-dependent calcium channel gamma-5 subunit (Cacng5).